We begin with the raw amino-acid sequence, 825 residues long: Hypoxia-inducible factor 1-alpha (825 aa).

The tract at residues 1-30 is disordered; sequence MEGAGGENEKKKMSSERRKEKSRDAARSRR. An interaction with TSGA10 region spans residues 1 to 401; it reads MEGAGGENEK…KEPDALTLLA (401 aa). The span at 7–30 shows a compositional bias: basic and acidic residues; sequence ENEKKKMSSERRKEKSRDAARSRR. A bHLH domain is found at 17–70; it reads RRKEKSRDAARSRRSKESEVFYELAHQLPLPHNVSSHLDKASVMRLTISYLRVR. Positions 21 to 30 are DNA-binding; the sequence is KSRDAARSRR. Residues 85-158 form the PAS 1 domain; it reads KAQMNCFYLK…THRNGPVRKG (74 aa). The segment at 170–191 is required for heterodimer formation with ARNT; the sequence is RMKCTLTSRGRTMNIKSATWKV. The PAS 2 domain occupies 228–298; that stretch reads PHPSNIEIPL…KTHHDMFTKG (71 aa). Ser-247 carries the post-translational modification Phosphoserine; by CK1. The PAC domain occupies 302 to 345; that stretch reads TGQYRMLAKRGGYVWVETQATVIYNTKDSQPQCIVCVNYVVSGI. The segment at 401 to 602 is ODD; that stretch reads APAAGDTIIS…STVTGFQQTQ (202 aa). The residue at position 402 (Pro-402) is a 4-hydroxyproline. Over residues 492-516 the composition is skewed to polar residues; sequence QIQDQPASPSDGSTRQSSPEPNSPS. Positions 492–520 are disordered; the sequence is QIQDQPASPSDGSTRQSSPEPNSPSEYCF. Residues 530–574 form an NTAD region; it reads FKLELVEKLFAEDTEAKNPFSAQDTDLDLEMLAPYIPMDDDFQLR. Lys-531 carries the N6-acetyllysine; alternate modification. Lys-531 participates in a covalent cross-link: Glycyl lysine isopeptide (Lys-Gly) (interchain with G-Cter in ubiquitin); alternate. Residues Lys-537 and Lys-546 each participate in a glycyl lysine isopeptide (Lys-Gly) (interchain with G-Cter in ubiquitin) cross-link. Position 550 is a phosphoserine; by GSK3-beta (Ser-550). At Thr-554 the chain carries Phosphothreonine; by GSK3-beta. Position 563 is a 4-hydroxyproline (Pro-563). The residue at position 575 (Ser-575) is a Phosphoserine; by PLK3. Residues 575–784 are ID; it reads SFDQLSPLES…SDLACRLLGQ (210 aa). 2 disordered regions span residues 579-602 and 654-674; these read LSPL…QQTQ and AKAS…RAGK. Residue Ser-588 is modified to Phosphoserine; by GSK3-beta. The segment covering 654–667 has biased composition (polar residues); it reads AKASAYSGTHSRTA. Ser-657 carries the phosphoserine; by PLK3 modification. Residues 717-721 carry the Nuclear localization signal motif; sequence RKRKM. A CTAD region spans residues 785–825; it reads SMDESGLPQLTSYDCEVNAPIQGSRNLLQGEELLRALDQVN. S-nitrosocysteine is present on Cys-799. Asn-802 is modified ((3S)-3-hydroxyasparagine).

As to quaternary structure, interacts with the ARNT; forms a heterodimer that binds core DNA sequence 5'-TACGTG-3' within the hypoxia response element (HRE) of target gene promoters. Interacts with COPS5; the interaction increases the transcriptional activity of HIF1A through increased stability. Interacts with EP300 (via TAZ-type 1 domains); the interaction is stimulated in response to hypoxia and inhibited by CITED2. Interacts with CREBBP (via TAZ-type 1 domains). Interacts with NCOA1, NCOA2, APEX1 and HSP90. Interacts (hydroxylated within the ODD domain) with VHLL (via beta domain); the interaction, leads to polyubiquitination and subsequent HIF1A proteasomal degradation. During hypoxia, sumoylated HIF1A also binds VHL; the interaction promotes the ubiquitination of HIF1A. Interacts with SENP1; the interaction desumoylates HIF1A resulting in stabilization and activation of transcription. Interacts (via the ODD domain) with NAA10; the interaction appears not to acetylate HIF1A nor have any affect on protein stability, during hypoxia. Interacts with RWDD3; the interaction enhances HIF1A sumoylation. Interacts with TSGA10. Interacts with HIF3A. Interacts with RORA (via the DNA binding domain); the interaction enhances HIF1A transcription under hypoxia through increasing protein stability. Interaction with PSMA7 inhibits the transactivation activity of HIF1A under both normoxic and hypoxia-mimicking conditions. Interacts with USP20. Interacts with RACK1; promotes HIF1A ubiquitination and proteasome-mediated degradation. Interacts (via N-terminus) with USP19. Interacts with SIRT2. Interacts (deacetylated form) with EGLN1. Interacts with CBFA2T3. Interacts with HSP90AA1 and HSP90AB1. Interacts with DCUN1D1; this interaction increases the interaction between VHL and DCUN1D1. Interacts with HIF1AN. Post-translationally, S-nitrosylation of Cys-799 may be responsible for increased recruitment of p300 coactivator necessary for transcriptional activity of HIF-1 complex. In terms of processing, acetylation of Lys-531 by ARD1 increases interaction with VHL and stimulates subsequent proteasomal degradation. Deacetylated by SIRT2 increases its interaction with and hydroxylation by EGLN1 thereby inactivating HIF1A activity by inducing its proteasomal degradation. Ubiquitinated; in normoxia, following hydroxylation and interaction with VHL. Lys-531 appears to be the principal site of ubiquitination. Clioquinol, the Cu/Zn-chelator, inhibits ubiquitination through preventing hydroxylation at Asn-802. Ubiquitinated by E3 ligase VHL. Deubiquitinated by UCHL1. Post-translationally, requires phosphorylation for DNA-binding. Phosphorylation at Ser-247 by CSNK1D/CK1 represses kinase activity and impairs ARNT binding. Phosphorylation by GSK3-beta and PLK3 promote degradation by the proteasome. In terms of processing, the iron and 2-oxoglutarate dependent 3-hydroxylation of asparagine is (S) stereospecific within HIF CTAD domains. Sumoylated; with SUMO1 under hypoxia. Sumoylation is enhanced through interaction with RWDD3. Both sumoylation and desumoylation seem to be involved in the regulation of its stability during hypoxia. Sumoylation can promote either its stabilization or its VHL-dependent degradation by promoting hydroxyproline-independent HIF1A-VHL complex binding, thus leading to HIF1A ubiquitination and proteasomal degradation. Desumoylation by SENP1 increases its stability amd transcriptional activity. There is a disaccord between various publications on the effect of sumoylation and desumoylation on its stability and transcriptional activity. Post-translationally, in normoxia, is hydroxylated on Pro-402 and Pro-563 in the oxygen-dependent degradation domain (ODD) by EGLN1/PHD2 and EGLN2/PHD1. EGLN3/PHD3 has also been shown to hydroxylate Pro-563. The hydroxylated prolines promote interaction with VHL, initiating rapid ubiquitination and subsequent proteasomal degradation. Deubiquitinated by USP20. Under hypoxia, proline hydroxylation is impaired and ubiquitination is attenuated, resulting in stabilization. In normoxia, is hydroxylated on Asn-802 by HIF1AN, thus abrogating interaction with CREBBP and EP300 and preventing transcriptional activation. Repressed by iron ion, via Fe(2+) prolyl hydroxylase (PHD) enzymes-mediated hydroxylation and subsequent proteasomal degradation. Expressed in the kidney, higher expression is seen in the renal medulla than in the cortex. Expressed also in the perivenous zone of the liver.

It localises to the cytoplasm. Its subcellular location is the nucleus. It is found in the nucleus speckle. Its activity is regulated as follows. Induced by reactive oxygen species (ROS). Functions as a master transcriptional regulator of the adaptive response to hypoxia. Under hypoxic conditions, activates the transcription of over 40 genes, including erythropoietin, glucose transporters, glycolytic enzymes, vascular endothelial growth factor, HILPDA, and other genes whose protein products increase oxygen delivery or facilitate metabolic adaptation to hypoxia. Plays an essential role in embryonic vascularization, tumor angiogenesis and pathophysiology of ischemic disease. Heterodimerizes with ARNT; heterodimer binds to core DNA sequence 5'-TACGTG-3' within the hypoxia response element (HRE) of target gene promoters. Activation requires recruitment of transcriptional coactivators such as CREBBP and EP300. Activity is enhanced by interaction with NCOA1 and/or NCOA2. Interaction with redox regulatory protein APEX1 seems to activate CTAD and potentiates activation by NCOA1 and CREBBP. Involved in the axonal distribution and transport of mitochondria in neurons during hypoxia. The polypeptide is Hypoxia-inducible factor 1-alpha (Hif1a) (Rattus norvegicus (Rat)).